A 300-amino-acid chain; its full sequence is Protein THYLAKOID FORMATION 1, chloroplastic (300 aa).

The transit peptide at 1-67 (MAATAISSLS…SNVTADVPPV (67 aa)) directs the protein to the chloroplast. Over 68–196 (SETKSKFLKA…IAGRAGSKEG (129 aa)) the chain is Chloroplast intermembrane. The chain crosses the membrane as a helical span at residues 197 to 219 (FSYSRFFAVGLFRLLELASATDP). The Cytoplasmic portion of the chain corresponds to 220–300 (TVLDKLCASL…NPSFLVERKS (81 aa)). The stretch at 239–268 (DLDVYRNLLSKLVQAKELLKEYVEREKKKQ) forms a coiled coil.

Belongs to the THF1 family. As to quaternary structure, interacts with GPA1. Ubiquitous. Present at higher level in hypocotyls (at protein level). Ubiquitously expressed in all organs, in roots of both light-grown and dark-grown seedlings. Highly expressed in the root apical meristems.

Its subcellular location is the plastid. It is found in the chloroplast outer membrane. The protein resides in the chloroplast stroma. Functionally, involved in a dynamic process of vesicle-mediated thylakoid membrane biogenesis. Required for the normal organization of vesicles into mature thylakoid stacks and ultimately for leaf development. Also involved in a sugar-signaling mechanism in roots by mediating signaling between the plasma membrane and the plastid. Probably acts downstream of the plasma membrane-delimited heterotrimeric G-protein GPA1 in a D-glucose signaling pathway. In Arabidopsis thaliana (Mouse-ear cress), this protein is Protein THYLAKOID FORMATION 1, chloroplastic (THF1).